Reading from the N-terminus, the 179-residue chain is GTP-dependent dephospho-CoA kinase (179 aa).

GTP is bound by residues aspartate 55, valine 57, aspartate 74, lysine 76, and glutamate 128.

It belongs to the GTP-dependent DPCK family.

It carries out the reaction 3'-dephospho-CoA + GTP = GDP + CoA + H(+). It functions in the pathway cofactor biosynthesis; coenzyme A biosynthesis. Catalyzes the GTP-dependent phosphorylation of the 3'-hydroxyl group of dephosphocoenzyme A to form coenzyme A (CoA). The protein is GTP-dependent dephospho-CoA kinase of Saccharolobus islandicus (strain M.16.4 / Kamchatka #3) (Sulfolobus islandicus).